The following is a 481-amino-acid chain: Beta-1,3-glucan-binding protein (481 aa).

Residues 1-18 (RCARVCAVLFLFIQISYG) form the signal peptide. The CBM39 domain occupies 20–120 (YQVPQVTVQA…LSFTVSALED (101 aa)). Asparagine 110 is a glycosylation site (N-linked (GlcNAc...) asparagine). Positions 124–481 (TGTGTDPVPT…LVDYVKVVAL (358 aa)) constitute a GH16 domain.

Belongs to the insect beta-1,3-glucan binding protein family.

The protein localises to the secreted. Involved in the recognition of invading microorganisms. Binds specifically to beta-1,3-glucan and activates the phenoloxidase cascade. The chain is Beta-1,3-glucan-binding protein from Hyphantria cunea (Fall webworm moth).